Reading from the N-terminus, the 591-residue chain is Aspartate--tRNA(Asp/Asn) ligase (591 aa).

L-aspartate is bound at residue Glu-176. The tract at residues 200–203 (QLFK) is aspartate. Arg-222 is an L-aspartate binding site. ATP is bound by residues 222–224 (RDE) and Gln-231. His-450 is an L-aspartate binding site. Glu-484 contributes to the ATP binding site. Residue Arg-491 coordinates L-aspartate. 536 to 539 (GLDR) contacts ATP.

Belongs to the class-II aminoacyl-tRNA synthetase family. Type 1 subfamily. Homodimer.

Its subcellular location is the cytoplasm. It catalyses the reaction tRNA(Asx) + L-aspartate + ATP = L-aspartyl-tRNA(Asx) + AMP + diphosphate. In terms of biological role, aspartyl-tRNA synthetase with relaxed tRNA specificity since it is able to aspartylate not only its cognate tRNA(Asp) but also tRNA(Asn). Reaction proceeds in two steps: L-aspartate is first activated by ATP to form Asp-AMP and then transferred to the acceptor end of tRNA(Asp/Asn). The chain is Aspartate--tRNA(Asp/Asn) ligase from Bacillus mycoides (strain KBAB4) (Bacillus weihenstephanensis).